A 540-amino-acid chain; its full sequence is Chaperonin GroEL 2 (540 aa).

ATP contacts are provided by residues 29–32 (TMGP), lysine 50, 86–90 (DGTTT), glycine 414, and aspartate 496.

Belongs to the chaperonin (HSP60) family. In terms of assembly, forms a cylinder of 14 subunits composed of two heptameric rings stacked back-to-back. Interacts with the co-chaperonin GroES.

The protein localises to the cytoplasm. The enzyme catalyses ATP + H2O + a folded polypeptide = ADP + phosphate + an unfolded polypeptide.. Functionally, together with its co-chaperonin GroES, plays an essential role in assisting protein folding. The GroEL-GroES system forms a nano-cage that allows encapsulation of the non-native substrate proteins and provides a physical environment optimized to promote and accelerate protein folding. The polypeptide is Chaperonin GroEL 2 (Rhodopirellula baltica (strain DSM 10527 / NCIMB 13988 / SH1)).